Consider the following 294-residue polypeptide: ATP phosphoribosyltransferase (294 aa).

The protein belongs to the ATP phosphoribosyltransferase family. Long subfamily. Requires Mg(2+) as cofactor.

Its subcellular location is the cytoplasm. It catalyses the reaction 1-(5-phospho-beta-D-ribosyl)-ATP + diphosphate = 5-phospho-alpha-D-ribose 1-diphosphate + ATP. Its pathway is amino-acid biosynthesis; L-histidine biosynthesis; L-histidine from 5-phospho-alpha-D-ribose 1-diphosphate: step 1/9. Feedback inhibited by histidine. Functionally, catalyzes the condensation of ATP and 5-phosphoribose 1-diphosphate to form N'-(5'-phosphoribosyl)-ATP (PR-ATP). Has a crucial role in the pathway because the rate of histidine biosynthesis seems to be controlled primarily by regulation of HisG enzymatic activity. This is ATP phosphoribosyltransferase from Pelodictyon phaeoclathratiforme (strain DSM 5477 / BU-1).